The sequence spans 607 residues: Condensin-2 complex subunit H2 (607 aa).

Threonine 19 is modified (phosphothreonine). 4 positions are modified to phosphoserine: serine 95, serine 231, serine 235, and serine 252. Disordered regions lie at residues 211 to 312 and 325 to 347; these read YPMS…WQSL and KGKP…KRKG. Residues 254 to 263 show a composition bias toward acidic residues; the sequence is GEEDAEDGAE. Serine 494 carries the phosphoserine modification.

The protein belongs to the CND2 H2 (condensin-2 subunit 2) family. Component of the condensin-2 complex, which contains the SMC2 and SMC4 heterodimer, and three non SMC subunits, NCAPG2, NCAPH2 and NCAPD3 that probably regulate the complex.

The protein resides in the nucleus. In terms of biological role, regulatory subunit of the condensin-2 complex, a complex that seems to provide chromosomes with an additional level of organization and rigidity and in establishing mitotic chromosome architecture. May promote the resolution of double-strand DNA catenanes (intertwines) between sister chromatids. Condensin-mediated compaction likely increases tension in catenated sister chromatids, providing directionality for type II topoisomerase-mediated strand exchanges toward chromatid decatenation. Required for decatenation of chromatin bridges at anaphase. Early in neurogenesis, may play an essential role to ensure accurate mitotic chromosome condensation in neuron stem cells, ultimately affecting neuron pool and cortex size. Seems to have lineage-specific role in T-cell development. This Mus musculus (Mouse) protein is Condensin-2 complex subunit H2.